Consider the following 174-residue polypeptide: MVKVGMPKVGIIMGSDSDLPVMKEAAKVLEDFEVDYEMKVISAHRTPERLHEYARTAEERGIEVIIAGAGGAAHLPGVLAALTMIPVIGVPIKSKALNGLDSLLSIVQMPPGIPVATVGIDGAKNAALLALEILSIKYPEIKEKLKKYREDMKRKVEEKSKKLEELGWRKYLEG.

The substrate site is built by serine 15, aspartate 18, and arginine 45.

The protein belongs to the AIR carboxylase family. Class I subfamily.

It catalyses the reaction 5-carboxyamino-1-(5-phospho-D-ribosyl)imidazole + H(+) = 5-amino-1-(5-phospho-D-ribosyl)imidazole-4-carboxylate. It functions in the pathway purine metabolism; IMP biosynthesis via de novo pathway; 5-amino-1-(5-phospho-D-ribosyl)imidazole-4-carboxylate from 5-amino-1-(5-phospho-D-ribosyl)imidazole (N5-CAIR route): step 2/2. Functionally, catalyzes the conversion of N5-carboxyaminoimidazole ribonucleotide (N5-CAIR) to 4-carboxy-5-aminoimidazole ribonucleotide (CAIR). In Pyrococcus abyssi (strain GE5 / Orsay), this protein is N5-carboxyaminoimidazole ribonucleotide mutase.